Reading from the N-terminus, the 318-residue chain is DNA-directed RNA polymerase subunit alpha 2 (318 aa).

The tract at residues 1 to 227 (MALENLLHPT…NQLRNILDIE (227 aa)) is alpha N-terminal domain (alpha-NTD). The interval 242-318 (INPILLKHVE…TLIENWPQDL (77 aa)) is alpha C-terminal domain (alpha-CTD).

It belongs to the RNA polymerase alpha chain family. As to quaternary structure, homodimer. The RNAP catalytic core consists of 2 alpha, 1 beta, 1 beta' and 1 omega subunit. When a sigma factor is associated with the core the holoenzyme is formed, which can initiate transcription.

The enzyme catalyses RNA(n) + a ribonucleoside 5'-triphosphate = RNA(n+1) + diphosphate. Functionally, DNA-dependent RNA polymerase catalyzes the transcription of DNA into RNA using the four ribonucleoside triphosphates as substrates. This chain is DNA-directed RNA polymerase subunit alpha 2, found in Francisella tularensis subsp. tularensis (strain FSC 198).